Reading from the N-terminus, the 354-residue chain is Eukaryotic translation initiation factor 3 subunit H (354 aa).

The interval 1-28 is disordered; the sequence is MATRQPYQKKFQSRDQREQTSSQQAPNS. The span at 19-28 shows a compositional bias: polar residues; that stretch reads QTSSQQAPNS. The MPN domain maps to 33-174; sequence VTVDALVVMK…LSAFRLSNKA (142 aa).

The protein belongs to the eIF-3 subunit H family. In terms of assembly, component of the eukaryotic translation initiation factor 3 (eIF-3) complex.

Its subcellular location is the cytoplasm. Functionally, component of the eukaryotic translation initiation factor 3 (eIF-3) complex, which is involved in protein synthesis of a specialized repertoire of mRNAs and, together with other initiation factors, stimulates binding of mRNA and methionyl-tRNAi to the 40S ribosome. The eIF-3 complex specifically targets and initiates translation of a subset of mRNAs involved in cell proliferation. This chain is Eukaryotic translation initiation factor 3 subunit H, found in Monosiga brevicollis (Choanoflagellate).